Here is a 282-residue protein sequence, read N- to C-terminus: 3-methyl-2-oxobutanoate hydroxymethyltransferase (282 aa).

Residues D45 and D84 each contribute to the Mg(2+) site. 3-methyl-2-oxobutanoate-binding positions include D45–S46, D84, and K114. Residue E116 coordinates Mg(2+). E183 functions as the Proton acceptor in the catalytic mechanism.

It belongs to the PanB family. Homodecamer; pentamer of dimers. It depends on Mg(2+) as a cofactor.

It is found in the cytoplasm. It carries out the reaction 3-methyl-2-oxobutanoate + (6R)-5,10-methylene-5,6,7,8-tetrahydrofolate + H2O = 2-dehydropantoate + (6S)-5,6,7,8-tetrahydrofolate. Its pathway is cofactor biosynthesis; (R)-pantothenate biosynthesis; (R)-pantoate from 3-methyl-2-oxobutanoate: step 1/2. Its function is as follows. Catalyzes the reversible reaction in which hydroxymethyl group from 5,10-methylenetetrahydrofolate is transferred onto alpha-ketoisovalerate to form ketopantoate. The polypeptide is 3-methyl-2-oxobutanoate hydroxymethyltransferase (Syntrophobacter fumaroxidans (strain DSM 10017 / MPOB)).